The sequence spans 279 residues: Acetylglutamate kinase (279 aa).

Residues 62–63 (GG), Arg84, and Asn177 contribute to the substrate site.

The protein belongs to the acetylglutamate kinase family. ArgB subfamily.

The protein localises to the cytoplasm. The catalysed reaction is N-acetyl-L-glutamate + ATP = N-acetyl-L-glutamyl 5-phosphate + ADP. It functions in the pathway amino-acid biosynthesis; L-arginine biosynthesis; N(2)-acetyl-L-ornithine from L-glutamate: step 2/4. Its function is as follows. Catalyzes the ATP-dependent phosphorylation of N-acetyl-L-glutamate. This is Acetylglutamate kinase from Pseudothermotoga lettingae (strain ATCC BAA-301 / DSM 14385 / NBRC 107922 / TMO) (Thermotoga lettingae).